The following is a 383-amino-acid chain: ATP phosphoribosyltransferase regulatory subunit (383 aa).

Belongs to the class-II aminoacyl-tRNA synthetase family. HisZ subfamily. Heteromultimer composed of HisG and HisZ subunits.

The protein resides in the cytoplasm. It participates in amino-acid biosynthesis; L-histidine biosynthesis; L-histidine from 5-phospho-alpha-D-ribose 1-diphosphate: step 1/9. In terms of biological role, required for the first step of histidine biosynthesis. May allow the feedback regulation of ATP phosphoribosyltransferase activity by histidine. The polypeptide is ATP phosphoribosyltransferase regulatory subunit (Neisseria gonorrhoeae (strain NCCP11945)).